The primary structure comprises 120 residues: Large ribosomal subunit protein uL22 (120 aa).

Belongs to the universal ribosomal protein uL22 family. As to quaternary structure, part of the 50S ribosomal subunit.

This protein binds specifically to 23S rRNA; its binding is stimulated by other ribosomal proteins, e.g. L4, L17, and L20. It is important during the early stages of 50S assembly. It makes multiple contacts with different domains of the 23S rRNA in the assembled 50S subunit and ribosome. Its function is as follows. The globular domain of the protein is located near the polypeptide exit tunnel on the outside of the subunit, while an extended beta-hairpin is found that lines the wall of the exit tunnel in the center of the 70S ribosome. The protein is Large ribosomal subunit protein uL22 of Crocosphaera subtropica (strain ATCC 51142 / BH68) (Cyanothece sp. (strain ATCC 51142)).